The sequence spans 1102 residues: GPI inositol-deacylase (1102 aa).

Positions 1-90 (MHRRSSGSPV…NPPDCKSSSV (90 aa)) are disordered. Residues 58–70 (GASTPRSRNSSMW) are compositionally biased toward polar residues. An N-linked (GlcNAc...) asparagine glycan is attached at Asn-66. Residues 72-83 (TPPSSSMTSNPP) show a composition bias toward low complexity. Residues 121 to 141 (PCSILTAFTTLVASIFLFFIL) form a helical membrane-spanning segment. Residue Ser-308 is part of the active site. A run of 2 helical transmembrane segments spans residues 744-764 (LVMRYRTVFAAFPLLVVALVM) and 790-810 (SSLPMLLLAMSLLASSLATST). Asn-824 carries N-linked (GlcNAc...) asparagine glycosylation. The next 6 membrane-spanning stretches (helical) occupy residues 867–887 (VALALIFLLTSIYGFLRSKSG), 914–934 (ILLALVSTVIPYQFAYMVACI), 964–984 (SIFLLMLWILPINALVLLVWA), 1001–1021 (VLSIMPFVLLVEAMTTGTMIP), 1033–1053 (MLFFFIAIYSAIYGVSYAYLL), and 1056–1076 (LTNILAAWLVGIYFSASGFSL).

Belongs to the GPI inositol-deacylase family.

The protein resides in the endoplasmic reticulum membrane. Its function is as follows. Involved in inositol deacylation of GPI-anchored proteins which plays important roles in the quality control and ER-associated degradation of GPI-anchored proteins. The chain is GPI inositol-deacylase (bst1) from Aspergillus oryzae (strain ATCC 42149 / RIB 40) (Yellow koji mold).